Here is a 92-residue protein sequence, read N- to C-terminus: Small ribosomal subunit protein uS19 (92 aa).

It belongs to the universal ribosomal protein uS19 family.

In terms of biological role, protein S19 forms a complex with S13 that binds strongly to the 16S ribosomal RNA. This is Small ribosomal subunit protein uS19 from Nitrobacter winogradskyi (strain ATCC 25391 / DSM 10237 / CIP 104748 / NCIMB 11846 / Nb-255).